A 196-amino-acid polypeptide reads, in one-letter code: ATP-dependent Clp protease proteolytic subunit (196 aa).

The active-site Nucleophile is the S101. H126 is an active-site residue.

Belongs to the peptidase S14 family. As to quaternary structure, component of the chloroplastic Clp protease core complex.

It localises to the plastid. It is found in the chloroplast stroma. It carries out the reaction Hydrolysis of proteins to small peptides in the presence of ATP and magnesium. alpha-casein is the usual test substrate. In the absence of ATP, only oligopeptides shorter than five residues are hydrolyzed (such as succinyl-Leu-Tyr-|-NHMec, and Leu-Tyr-Leu-|-Tyr-Trp, in which cleavage of the -Tyr-|-Leu- and -Tyr-|-Trp bonds also occurs).. Cleaves peptides in various proteins in a process that requires ATP hydrolysis. Has a chymotrypsin-like activity. Plays a major role in the degradation of misfolded proteins. The chain is ATP-dependent Clp protease proteolytic subunit from Nicotiana tabacum (Common tobacco).